Here is a 329-residue protein sequence, read N- to C-terminus: tRNA uridine(34) hydroxylase (329 aa).

Residues 123–217 (SDPDVILVDT…YLEEVPEEES (95 aa)) enclose the Rhodanese domain. The active-site Cysteine persulfide intermediate is the cysteine 177. Residues 285-329 (REKQVQLSNARGETHVGGDAAHLIDQRKKEKLAHKEQQRSGKKAK) are disordered. A compositionally biased stretch (basic and acidic residues) spans 296–323 (GETHVGGDAAHLIDQRKKEKLAHKEQQR).

This sequence belongs to the TrhO family.

The enzyme catalyses uridine(34) in tRNA + AH2 + O2 = 5-hydroxyuridine(34) in tRNA + A + H2O. Functionally, catalyzes oxygen-dependent 5-hydroxyuridine (ho5U) modification at position 34 in tRNAs. The chain is tRNA uridine(34) hydroxylase from Vibrio atlanticus (strain LGP32) (Vibrio splendidus (strain Mel32)).